Consider the following 137-residue polypeptide: Bacteriohemerythrin (137 aa).

Fe cation is bound by residues His21, His53, Glu57, His72, His76, His112, and Asp117.

It belongs to the hemerythrin family. Monomer.

Functionally, oxygen-binding protein. May be involved in a storage mechanism or for delivery to oxygen-requiring enzymes. The oxygen-binding site contains two iron atoms. The sequence is that of Bacteriohemerythrin from Ralstonia nicotianae (strain ATCC BAA-1114 / GMI1000) (Ralstonia solanacearum).